The following is a 358-amino-acid chain: ATPase ASNA1 homolog (358 aa).

35 to 42 is an ATP binding site; the sequence is KGGVGKTT. Asp-64 is a catalytic residue. ATP-binding residues include Glu-235 and Asn-262.

It belongs to the arsA ATPase family. In terms of assembly, homodimer.

It is found in the cytoplasm. It localises to the endoplasmic reticulum. Its function is as follows. ATPase required for the post-translational delivery of tail-anchored (TA) proteins to the endoplasmic reticulum. Recognizes and selectively binds the transmembrane domain of TA proteins in the cytosol. This complex then targets to the endoplasmic reticulum by membrane-bound receptors, where the tail-anchored protein is released for insertion. This process is regulated by ATP binding and hydrolysis. ATP binding drives the homodimer towards the closed dimer state, facilitating recognition of newly synthesized TA membrane proteins. ATP hydrolysis is required for insertion. Subsequently, the homodimer reverts towards the open dimer state, lowering its affinity for the membrane-bound receptor, and returning it to the cytosol to initiate a new round of targeting. This chain is ATPase ASNA1 homolog, found in Babesia bovis.